Consider the following 340-residue polypeptide: MSDEDDVDDVDAEQDEVESDKEIEEWEDYRKETEEASEEWLPTPITEAMMKEGLSLLCKIGSGLAHAYIKLEAKDRDLTDISLLRSYIHLRYVDISENHITDISPLNSLTHLLWLKADGNQLRSARMNELPYLQIASFSYNQIIDTEGIFHPRLGSLDLKGNRIHQVTGLDPERLSSLHTLELRGNQLESTKGIYLPKLKNLYLAQNLLKKVEGLENLSNLTTLHLRDNQIETLNGFSQEMKSLQYLNLRSNMISDLAELAKLRDLPKLRALVLLDNPCADETDYRQEALVQMAHLERLDKEFYEDDDRAEAEEIRQRLKEEQDQDLDPDQDMEPYLPPV.

Residues 1 to 27 (MSDEDDVDDVDAEQDEVESDKEIEEWE) show a composition bias toward acidic residues. Residues 1-38 (MSDEDDVDDVDAEQDEVESDKEIEEWEDYRKETEEASE) form a disordered region. LRR repeat units follow at residues 89-110 (HLRY…NSLT), 111-134 (HLLW…PYLQ), 177-197 (SLHT…IYLP), 198-219 (KLKN…ENLS), 220-241 (NLTT…SQEM), and 243-264 (SLQY…AKLR). The interaction with RSPH9 stretch occupies residues 205 to 340 (AQNLLKKVEG…QDMEPYLPPV (136 aa)). Residues 277–315 (NPCADETDYRQEALVQMAHLERLDKEFYEDDDRAEAEEI) enclose the LRRCT domain. Residues 305 to 328 (EDDDRAEAEEIRQRLKEEQDQDLD) are a coiled coil. Residues 317-340 (QRLKEEQDQDLDPDQDMEPYLPPV) form a disordered region. Acidic residues predominate over residues 323–333 (QDQDLDPDQDM).

Component of the axonemal radial spoke complex. Interacts with RSPH3A and RSPH3B. Interacts with RSPH9. As to expression, expressed in the testis (at protein level).

It localises to the cytoplasm. The protein localises to the cytoskeleton. The protein resides in the flagellum axoneme. In terms of biological role, essential for sperm motility and male fertility. Plays an important role in the proper assembly of the third radial spoke (RS3) head and the bridge structure between RS2 and RS3 in the sperm flagella. The chain is Leucine-rich repeat-containing protein 23 (Lrrc23) from Mus musculus (Mouse).